The chain runs to 240 residues: Phosphoribosylaminoimidazole-succinocarboxamide synthase (240 aa).

The protein belongs to the SAICAR synthetase family.

The enzyme catalyses 5-amino-1-(5-phospho-D-ribosyl)imidazole-4-carboxylate + L-aspartate + ATP = (2S)-2-[5-amino-1-(5-phospho-beta-D-ribosyl)imidazole-4-carboxamido]succinate + ADP + phosphate + 2 H(+). The protein operates within purine metabolism; IMP biosynthesis via de novo pathway; 5-amino-1-(5-phospho-D-ribosyl)imidazole-4-carboxamide from 5-amino-1-(5-phospho-D-ribosyl)imidazole-4-carboxylate: step 1/2. The protein is Phosphoribosylaminoimidazole-succinocarboxamide synthase of Wolbachia pipientis subsp. Culex pipiens (strain wPip).